The primary structure comprises 294 residues: MTADRPALRTGDGDTRLSFGSNLSSFTEYLRGHAPELLPENRIGHRSHSTRGGDGMESGDLAPHGTTIVALTYKGGVLLAGDRRATQGNLIASRDVEKVYVTDEYSAAGIAGTAGIAIELVRLFAVELEHYEKIEGVPLTFDGKANRLASMVRGNLGAAMQGLAVVPLLVGYDLDADEEARAGRIVSYDVVGGRYEERAGYHAVGSGSLFAKSALKKIYSPDSDEETALRAAIESLYDAADDDSATGGPDLTRGIYPTAVTITQAGAVHVSEETTSELARRIVAERTEEGGSAR.

Residues 1-65 (MTADRPALRT…MESGDLAPHG (65 aa)) constitute a propeptide, removed in mature form; by autocatalysis. Thr66 serves as the catalytic Nucleophile.

Belongs to the peptidase T1B family. In terms of assembly, the 20S proteasome core is composed of 14 alpha and 14 beta subunits that assemble into four stacked heptameric rings, resulting in a barrel-shaped structure. The two inner rings, each composed of seven catalytic beta subunits, are sandwiched by two outer rings, each composed of seven alpha subunits. The catalytic chamber with the active sites is on the inside of the barrel. Has a gated structure, the ends of the cylinder being occluded by the N-termini of the alpha-subunits. Is capped by the proteasome-associated ATPase, ARC.

The protein resides in the cytoplasm. It catalyses the reaction Cleavage of peptide bonds with very broad specificity.. It participates in protein degradation; proteasomal Pup-dependent pathway. Its activity is regulated as follows. The formation of the proteasomal ATPase ARC-20S proteasome complex, likely via the docking of the C-termini of ARC into the intersubunit pockets in the alpha-rings, may trigger opening of the gate for substrate entry. Interconversion between the open-gate and close-gate conformations leads to a dynamic regulation of the 20S proteasome proteolysis activity. In terms of biological role, component of the proteasome core, a large protease complex with broad specificity involved in protein degradation. The protein is Proteasome subunit beta of Rhodococcus opacus (strain B4).